We begin with the raw amino-acid sequence, 65 residues long: Trypsin inhibitor 1 (65 aa).

3 disulfide bridges follow: Cys-39–Cys-56, Cys-46–Cys-58, and Cys-52–Cys-64.

This sequence belongs to the protease inhibitor I7 (squash-type serine protease inhibitor) family.

It is found in the secreted. Its function is as follows. Inhibits trypsin. This is Trypsin inhibitor 1 from Trichosanthes kirilowii (Chinese snake gourd).